Consider the following 91-residue polypeptide: Large ribosomal subunit protein uL29 (91 aa).

Positions 67 to 91 are disordered; the sequence is AAPLAESSAPAKTKSRARKSKKEAL. Positions 79–91 are enriched in basic residues; it reads TKSRARKSKKEAL.

This sequence belongs to the universal ribosomal protein uL29 family.

The sequence is that of Large ribosomal subunit protein uL29 from Acidobacterium capsulatum (strain ATCC 51196 / DSM 11244 / BCRC 80197 / JCM 7670 / NBRC 15755 / NCIMB 13165 / 161).